The sequence spans 37 residues: Large ribosomal subunit protein bL36 (37 aa).

The protein belongs to the bacterial ribosomal protein bL36 family.

The chain is Large ribosomal subunit protein bL36 from Helicobacter pylori (strain ATCC 700392 / 26695) (Campylobacter pylori).